Consider the following 586-residue polypeptide: CTP synthase 2 (586 aa).

A Glutamine amidotransferase type-1 domain is found at 300-554; sequence SIALVGKYTK…LAATGNLNAY (255 aa). Residues Cys-399, His-526, and Glu-528 each act as for GATase activity in the active site. The segment at 563–586 is disordered; it reads SSDRYSDASDDSFSEPRIAELEIS. A phosphoserine mark is found at Ser-568, Ser-571, and Ser-574.

It belongs to the CTP synthase family.

The catalysed reaction is UTP + L-glutamine + ATP + H2O = CTP + L-glutamate + ADP + phosphate + 2 H(+). The protein operates within pyrimidine metabolism; CTP biosynthesis via de novo pathway; CTP from UDP: step 2/2. In terms of biological role, catalyzes the ATP-dependent amination of UTP to CTP with either L-glutamine or ammonia as the source of nitrogen. Constitutes the rate-limiting enzyme in the synthesis of cytosine nucleotides. This is CTP synthase 2 (CTPS2) from Homo sapiens (Human).